A 347-amino-acid polypeptide reads, in one-letter code: uncharacterized protein (347 aa).

Transmembrane regions (helical) follow at residues 15–35, 46–66, 84–104, 111–131, 149–169, 182–202, 214–234, 249–269, 283–303, and 312–332; these read FVPSWFAAVMGTGILAVDSLL, VAVGLFYFNVLLFFIFLVPWV, VLSAFYPTIAVSCLVLGADFI, FWGGVFWTLGAIGMFLFSLIV, GWYIPPVGLIVIPIAGSLIMP, INYFGWGAGFFLYLALLAVVI, AMAPTVWINLGPIGAGIVALI, FYIFSFIFWGFGLWWSLMAII, AMSWWAFIFPLGAYVASSHLV, and IDYIGFGLYWLLFFFWAITLI.

It belongs to the tellurite-resistance/dicarboxylate transporter (TDT) family.

It localises to the cell membrane. This is an uncharacterized protein from Methanocaldococcus jannaschii (strain ATCC 43067 / DSM 2661 / JAL-1 / JCM 10045 / NBRC 100440) (Methanococcus jannaschii).